We begin with the raw amino-acid sequence, 238 residues long: Ribonuclease PH (238 aa).

Residues arginine 86 and glycine 124–arginine 126 each bind phosphate.

This sequence belongs to the RNase PH family. In terms of assembly, homohexameric ring arranged as a trimer of dimers.

It carries out the reaction tRNA(n+1) + phosphate = tRNA(n) + a ribonucleoside 5'-diphosphate. In terms of biological role, phosphorolytic 3'-5' exoribonuclease that plays an important role in tRNA 3'-end maturation. Removes nucleotide residues following the 3'-CCA terminus of tRNAs; can also add nucleotides to the ends of RNA molecules by using nucleoside diphosphates as substrates, but this may not be physiologically important. Probably plays a role in initiation of 16S rRNA degradation (leading to ribosome degradation) during starvation. This Brucella anthropi (strain ATCC 49188 / DSM 6882 / CCUG 24695 / JCM 21032 / LMG 3331 / NBRC 15819 / NCTC 12168 / Alc 37) (Ochrobactrum anthropi) protein is Ribonuclease PH.